Reading from the N-terminus, the 85-residue chain is Large ribosomal subunit protein bL27 (85 aa).

Positions M1–G22 are disordered.

It belongs to the bacterial ribosomal protein bL27 family.

The chain is Large ribosomal subunit protein bL27 from Escherichia coli O6:K15:H31 (strain 536 / UPEC).